Consider the following 119-residue polypeptide: NAD(P)H-quinone oxidoreductase subunit M (119 aa).

Belongs to the complex I NdhM subunit family. NDH-1 can be composed of about 15 different subunits; different subcomplexes with different compositions have been identified which probably have different functions.

It localises to the cellular thylakoid membrane. The catalysed reaction is a plastoquinone + NADH + (n+1) H(+)(in) = a plastoquinol + NAD(+) + n H(+)(out). It catalyses the reaction a plastoquinone + NADPH + (n+1) H(+)(in) = a plastoquinol + NADP(+) + n H(+)(out). Functionally, NDH-1 shuttles electrons from an unknown electron donor, via FMN and iron-sulfur (Fe-S) centers, to quinones in the respiratory and/or the photosynthetic chain. The immediate electron acceptor for the enzyme in this species is believed to be plastoquinone. Couples the redox reaction to proton translocation, and thus conserves the redox energy in a proton gradient. Cyanobacterial NDH-1 also plays a role in inorganic carbon-concentration. This is NAD(P)H-quinone oxidoreductase subunit M from Picosynechococcus sp. (strain ATCC 27264 / PCC 7002 / PR-6) (Agmenellum quadruplicatum).